We begin with the raw amino-acid sequence, 219 residues long: Cytidylate kinase (219 aa).

Residue 9 to 17 (GPAGSGKTT) coordinates ATP.

This sequence belongs to the cytidylate kinase family. Type 1 subfamily.

The protein localises to the cytoplasm. The enzyme catalyses CMP + ATP = CDP + ADP. It carries out the reaction dCMP + ATP = dCDP + ADP. The chain is Cytidylate kinase from Fervidobacterium nodosum (strain ATCC 35602 / DSM 5306 / Rt17-B1).